A 592-amino-acid chain; its full sequence is MRVLCAFPEAMASSSSRPPSCLALVALFLALLLHLSLSFHAGNRRPLPVDRATGLKEKTLILLDVSTKNPVRTVNENFLSLQLDPSIIHDGWLDFLSSKRLVTLARGLSPAFLRFGGKRTDFLQFQNLRNPAKSRGGPGPDYYLKNYEDDIVRSDVALDKQKGCKIAQHPDVMLELQREKASQMHLVLLKEQYSNTYSNLILTARSLDKLYNFADCSGLHLIFALNALRRNPNNSWNSSSALSLLKYSASKKYNISWELGNEPNNYRSIHGRAVNGSQLGKDYIQLKSLLQPIRVYSRASLYGPNIGRPRKNVIALLDGFMKVAGSTVDAVTWQHCYIDGRVVKVMDFLKTRLLDTLSDQIRKIQKVVNTYTPGKKIWLEGVVTTSAGGTNNLSDSYAAGFLWLNTLGMLANQGIDVVIRHSFFDHGYNHLVDQNFNPLPDYWLSLLYKRLIGPKVLAVHVAGLQRKPRPGRVIRDKLRIYAHCTNHHNHNYVRGSITLFIINLHRSRKKIKLAGTLRDKLVHQYLLQPYGQEGLKSKSVQLNGQPLVMVDDGTLPELKPRPLRAGRTLVIPPVTMGFYVVKNVNALACRYR.

The signal sequence occupies residues 1-38 (MRVLCAFPEAMASSSSRPPSCLALVALFLALLLHLSLS). 2 N-linked (GlcNAc...) asparagine glycosylation sites follow: Asn254 and Asn392.

Belongs to the glycosyl hydrolase 79 family. As to quaternary structure, interacts with HPSE. Interacts with SDC1 (via glycan chains).

Its subcellular location is the secreted. The protein resides in the extracellular space. The protein localises to the extracellular matrix. Binds heparin and heparan sulfate with high affinity, but lacks heparanase activity. Inhibits HPSE, possibly by competing for its substrates (in vitro). This Mus musculus (Mouse) protein is Inactive heparanase-2 (Hpse2).